We begin with the raw amino-acid sequence, 908 residues long: Probable disease resistance RPP8-like protein 4 (908 aa).

Positions 15–57 (DLLSRESERLQGIDEQLDGLKRQLRSLQSLLKDADAKKHGSDR) form a coiled coil. An NB-ARC domain is found at 146 to 459 (RQRVQREIRQ…AEGIYDGSTI (314 aa)). 192–199 (GMGGIGKT) is an ATP binding site. 3 LRR repeats span residues 575 to 599 (LTLL…SIGG), 600 to 623 (LIHL…MRNL), and 842 to 867 (MPCL…KYIT).

The protein belongs to the disease resistance NB-LRR family. RPP8/HRT subfamily.

Functionally, potential disease resistance protein. This is Probable disease resistance RPP8-like protein 4 (RPP8L4) from Arabidopsis thaliana (Mouse-ear cress).